A 127-amino-acid polypeptide reads, in one-letter code: Large ribosomal subunit protein uL24 (127 aa).

It belongs to the universal ribosomal protein uL24 family. As to quaternary structure, part of the 50S ribosomal subunit.

In terms of biological role, one of two assembly initiator proteins, it binds directly to the 5'-end of the 23S rRNA, where it nucleates assembly of the 50S subunit. Functionally, one of the proteins that surrounds the polypeptide exit tunnel on the outside of the subunit. The sequence is that of Large ribosomal subunit protein uL24 from Leptospira biflexa serovar Patoc (strain Patoc 1 / ATCC 23582 / Paris).